A 481-amino-acid chain; its full sequence is GTPase Obg (481 aa).

The 158-residue stretch at 2–159 (TTFVDRVVLH…IDVVLELKSV (158 aa)) folds into the Obg domain. In terms of domain architecture, OBG-type G spans 160 to 330 (ADVGLVGYPS…LMYAMGELVT (171 aa)). GTP-binding positions include 166 to 173 (GYPSAGKS), 191 to 195 (FTTLV), 212 to 215 (DVPG), 282 to 285 (NKVD), and 311 to 313 (SAA). Mg(2+) is bound by residues serine 173 and threonine 193. In terms of domain architecture, OCT spans 348–426 (PKAVDDAGFT…IGEREFDWQP (79 aa)). Basic and acidic residues predominate over residues 439-452 (GDQRLAEKSERPSA). The interval 439–481 (GDQRLAEKSERPSATERLAARKARRQRPEDEAEADEPVGDGEE) is disordered. The span at 468 to 481 (DEAEADEPVGDGEE) shows a compositional bias: acidic residues.

The protein belongs to the TRAFAC class OBG-HflX-like GTPase superfamily. OBG GTPase family. As to quaternary structure, monomer. The cofactor is Mg(2+).

The protein localises to the cytoplasm. An essential GTPase which binds GTP, GDP and possibly (p)ppGpp with moderate affinity, with high nucleotide exchange rates and a fairly low GTP hydrolysis rate. Plays a role in control of the cell cycle, stress response, ribosome biogenesis and in those bacteria that undergo differentiation, in morphogenesis control. This is GTPase Obg from Salinispora tropica (strain ATCC BAA-916 / DSM 44818 / JCM 13857 / NBRC 105044 / CNB-440).